The primary structure comprises 129 residues: Small ribosomal subunit protein uS11 (129 aa).

This sequence belongs to the universal ribosomal protein uS11 family. Part of the 30S ribosomal subunit. Interacts with proteins S7 and S18. Binds to IF-3.

Located on the platform of the 30S subunit, it bridges several disparate RNA helices of the 16S rRNA. Forms part of the Shine-Dalgarno cleft in the 70S ribosome. This is Small ribosomal subunit protein uS11 from Desulfovibrio desulfuricans (strain ATCC 27774 / DSM 6949 / MB).